The sequence spans 330 residues: Class III chitinase ARB_03514 (330 aa).

The signal sequence occupies residues 1-22 (MSSVKNILSFVALFAGVKTAYA). A GH18 domain is found at 23-314 (GLNSPGHNNV…SAVKGALSAG (292 aa)). Asparagine 61 and asparagine 135 each carry an N-linked (GlcNAc...) asparagine glycan. Glutamate 155 functions as the Proton donor in the catalytic mechanism. N-linked (GlcNAc...) asparagine glycans are attached at residues asparagine 278 and asparagine 302.

It belongs to the glycosyl hydrolase 18 family. Chitinase class III subfamily. Monomer.

It is found in the secreted. It catalyses the reaction Random endo-hydrolysis of N-acetyl-beta-D-glucosaminide (1-&gt;4)-beta-linkages in chitin and chitodextrins.. In terms of biological role, secreted chitinase involved in the degradation of chitin, a component of the cell walls of fungi and exoskeletal elements of some animals (including worms and arthropods). Plays a morphogenetic role during apical growth, cell division and differentiation (cell wall morphogenesis). This is Class III chitinase ARB_03514 from Arthroderma benhamiae (strain ATCC MYA-4681 / CBS 112371) (Trichophyton mentagrophytes).